Here is a 447-residue protein sequence, read N- to C-terminus: Serine/threonine-protein phosphatase 2A 55 kDa regulatory subunit B gamma isoform (447 aa).

7 WD repeats span residues 22–61 (TEAD…KNAP), 87–128 (EIEE…KRPE), 171–209 (GHTY…RSFN), 220–260 (DLTE…LCDK), 279–317 (EIIS…RPIE), 334–375 (ENDC…DVTL), and 410–446 (DFTK…NSDM).

This sequence belongs to the phosphatase 2A regulatory subunit B family. In terms of assembly, PP2A consists of a common heterodimeric core enzyme, composed of a 36 kDa catalytic subunit (subunit C) and a 65 kDa constant regulatory subunit (PR65 or subunit A), that associates with a variety of regulatory subunits. Proteins that associate with the core dimer include three families of regulatory subunits B (the R2/B/PR55/B55, R3/B''/PR72/PR130/PR59 and R5/B'/B56 families), the 48 kDa variable regulatory subunit, viral proteins, and cell signaling molecules. Interacts with IER5.

In terms of biological role, the B regulatory subunit might modulate substrate selectivity and catalytic activity, and might also direct the localization of the catalytic enzyme to a particular subcellular compartment. The protein is Serine/threonine-protein phosphatase 2A 55 kDa regulatory subunit B gamma isoform (PPP2R2C) of Homo sapiens (Human).